A 351-amino-acid chain; its full sequence is Flagellar P-ring protein (351 aa).

Residues 1 to 20 (MKKILFLFTASLLLHVTLQA) form the signal peptide.

The protein belongs to the FlgI family. The basal body constitutes a major portion of the flagellar organelle and consists of four rings (L,P,S, and M) mounted on a central rod.

The protein localises to the periplasm. Its subcellular location is the bacterial flagellum basal body. Functionally, assembles around the rod to form the L-ring and probably protects the motor/basal body from shearing forces during rotation. This chain is Flagellar P-ring protein, found in Sulfurimonas denitrificans (strain ATCC 33889 / DSM 1251) (Thiomicrospira denitrificans (strain ATCC 33889 / DSM 1251)).